The sequence spans 496 residues: Membrane-bound lytic murein transglycosylase F (496 aa).

The N-terminal stretch at 1 to 29 (MFFRPDFRPRCAKWLIATGLFLMLGACVE) is a signal peptide. Positions 30–267 (KPTTLERVKE…RLKDRYYGHV (238 aa)) are non-LT domain. An LT domain region spans residues 268–496 (DVLGYVGAYT…SGSSPDKPAL (229 aa)). Glu314 is a catalytic residue. The disordered stretch occupies residues 464–496 (VADGNLHVPGVDKTQPPAPPAPASGSSPDKPAL). The segment covering 486 to 496 (ASGSSPDKPAL) has biased composition (low complexity).

This sequence in the N-terminal section; belongs to the bacterial solute-binding protein 3 family. The protein in the C-terminal section; belongs to the transglycosylase Slt family.

It is found in the cell outer membrane. The enzyme catalyses Exolytic cleavage of the (1-&gt;4)-beta-glycosidic linkage between N-acetylmuramic acid (MurNAc) and N-acetylglucosamine (GlcNAc) residues in peptidoglycan, from either the reducing or the non-reducing ends of the peptidoglycan chains, with concomitant formation of a 1,6-anhydrobond in the MurNAc residue.. Murein-degrading enzyme that degrades murein glycan strands and insoluble, high-molecular weight murein sacculi, with the concomitant formation of a 1,6-anhydromuramoyl product. Lytic transglycosylases (LTs) play an integral role in the metabolism of the peptidoglycan (PG) sacculus. Their lytic action creates space within the PG sacculus to allow for its expansion as well as for the insertion of various structures such as secretion systems and flagella. In Pseudomonas savastanoi pv. phaseolicola (strain 1448A / Race 6) (Pseudomonas syringae pv. phaseolicola (strain 1448A / Race 6)), this protein is Membrane-bound lytic murein transglycosylase F.